The sequence spans 178 residues: uncharacterized protein (178 aa).

This is an uncharacterized protein from Saccharomyces cerevisiae (strain ATCC 204508 / S288c) (Baker's yeast).